A 770-amino-acid chain; its full sequence is ATP-dependent RNA helicase HCA4 (770 aa).

The Q motif signature appears at Lys41 to Ala69. The Helicase ATP-binding domain maps to Ile72–Val246. Ala85–Thr92 serves as a coordination point for ATP. The DEAD box motif lies at Asp194–Asp197. The region spanning Lys278–Leu437 is the Helicase C-terminal domain. A phosphoserine mark is found at Ser692, Ser710, Ser714, and Ser743. Residues Gly705–His724 form a disordered region.

This sequence belongs to the DEAD box helicase family. DDX10/DBP4 subfamily. In terms of assembly, interacts with the U3 and U14 snoRNAs. Associates with pre-ribosomal complexes.

It is found in the nucleus. The protein resides in the nucleolus. It catalyses the reaction ATP + H2O = ADP + phosphate + H(+). ATP-dependent RNA helicase required for ribosome biogenesis. Involved in the release of U14 snoRNA in pre-ribosomal complexes. Required for pre-rRNA cleavage at site A2. This is ATP-dependent RNA helicase HCA4 (HCA4) from Saccharomyces cerevisiae (strain ATCC 204508 / S288c) (Baker's yeast).